A 321-amino-acid polypeptide reads, in one-letter code: MSDALLNAGRQTLMLELQEASRLPERLGDDFVRAANIIIHCEGKVIVSGIGKSGHIGKKIAATLASTGTPAFFVHPAEALHGDLGMIESRDVMLFISYSGGAKELDLIIPRLEDKSVALLAMTGKLHSPLGRAAKAVLDISVEREACPMHLAPTSSTVNTLMMGDALAMAVMQARGFNEEDFARSHPAGALGARLLNNVHHLMRQGDAIPQVMLATSVMDAMLELSRTGLGLVAVCDEQHVVKGVFTDGDLRRWLVGGGALTTPVSEAMTPNGITLQAQSRAIDAKELLMKRKITAAPVVDENGKLTGAINLQDFYQAGII.

In terms of domain architecture, SIS spans 34–177 (AANIIIHCEG…AMAVMQARGF (144 aa)). 49 to 54 (GIGKSG) is a binding site for ATP. Substrate is bound by residues 68–69 (GT), His75, His81, 107–116 (LIIPRLEDKS), and 141–143 (SVE). Position 75 (His75) interacts with Zn(2+). One can recognise a CBS 1 domain in the interval 203 to 261 (MRQGDAIPQVMLATSVMDAMLELSRTGLGLVAVCDEQHVVKGVFTDGDLRRWLVGGGAL). Position 267 (Glu267) interacts with substrate. The CBS 2 domain occupies 269–321 (MTPNGITLQAQSRAIDAKELLMKRKITAAPVVDENGKLTGAINLQDFYQAGII).

This sequence belongs to the SIS family. GutQ/KpsF subfamily. As to quaternary structure, homotetramer.

The enzyme catalyses D-arabinose 5-phosphate = D-ribulose 5-phosphate. In terms of biological role, catalyzes the reversible aldol-ketol isomerization between D-ribulose 5-phosphate (Ru5P) and D-arabinose 5-phosphate (A5P). It is also able of sustaining the biosynthetic pathway of 3-deoxy-D-manno-octulosonate (KDO), a unique 8-carbon sugar component of lipopolysaccharides (LPSs). This Salmonella typhimurium (strain LT2 / SGSC1412 / ATCC 700720) protein is Arabinose 5-phosphate isomerase GutQ (gutQ).